The chain runs to 859 residues: Bifunctional levopimaradiene synthase, chloroplastic (859 aa).

Residues 1–70 (MALLSSSLSS…IACVGEDSLS (70 aa)) constitute a chloroplast transit peptide. Residue Lys-259 coordinates substrate. The Mg(2+) site is built by Asp-392 and Asp-394. A DXDD motif motif is present at residues 392–395 (DIDD). A substrate-binding site is contributed by Lys-479. Residues Asp-611, Asp-615, Asn-755, Thr-759, and Glu-763 each contribute to the Mg(2+) site. Residues 611-615 (DDLYD) carry the DDXXD motif motif.

Belongs to the terpene synthase family. Tpsd subfamily. Mg(2+) is required as a cofactor.

The protein resides in the plastid. It is found in the chloroplast. The catalysed reaction is (2E,6E,10E)-geranylgeranyl diphosphate = (+)-copalyl diphosphate. It carries out the reaction (+)-copalyl diphosphate = abieta-8(14),12-diene + diphosphate. Its pathway is terpene metabolism; oleoresin biosynthesis. Involved in defensive oleoresin formation in conifers in response to insect attack or other injury. Involved in diterpene (C20) olefins biosynthesis. Bifunctional enzyme that catalyzes two sequential cyclizations of geranylgeranyl diphosphate (GGPP) to levopimaradiene. Levopimaradiene is the major products of the enzyme followed by abietadiene, neoabietadiene and palustradiene. The polypeptide is Bifunctional levopimaradiene synthase, chloroplastic (TPS-LAS) (Picea abies (Norway spruce)).